Consider the following 661-residue polypeptide: 7-beta-hydroxy-3-oxochol-24-oyl-CoA 4-desaturase (661 aa).

An FMN-binding site is contributed by Gln-104. 168 to 171 is a binding site for substrate; sequence HCAH. Tyr-173 (proton donor) is an active-site residue. Residues Arg-222, Lys-298, and 320–321 each bind FMN; that span reads GR. [4Fe-4S] cluster-binding residues include Cys-344, Cys-347, Cys-351, and Cys-363. Residues Gly-394, Glu-413, Gln-421, Lys-431, and Ala-458 each coordinate FAD.

In the N-terminal section; belongs to the NADH:flavin oxidoreductase/NADH oxidase family. Homotrimer. It depends on FMN as a cofactor. FAD is required as a cofactor. The cofactor is [4Fe-4S] cluster.

It carries out the reaction 7beta-hydroxy-3-oxochol-24-oyl-CoA + NAD(+) = 7beta-hydroxy-3-oxochol-4-en-24-oyl-CoA + NADH + H(+). It participates in lipid metabolism; bile acid degradation. With respect to regulation, activity is inhibited by sulfhydryl-reactive compounds, acriflavine, o-phenanthroline and EDTA. NADH-dependent flavin oxidoreductase. Stereo-specific NAD(H)-dependent 3-oxo-delta4-cholenoic acid oxidoreductase involved in bile acid 7beta-dehydroxylation. The polypeptide is 7-beta-hydroxy-3-oxochol-24-oyl-CoA 4-desaturase (Clostridium scindens (strain JCM 10418 / VPI 12708)).